We begin with the raw amino-acid sequence, 274 residues long: Putative phosphoenolpyruvate synthase regulatory protein (274 aa).

157 to 164 lines the ADP pocket; the sequence is GVSRCGKT.

This sequence belongs to the pyruvate, phosphate/water dikinase regulatory protein family. PSRP subfamily.

It carries out the reaction [pyruvate, water dikinase] + ADP = [pyruvate, water dikinase]-phosphate + AMP + H(+). The catalysed reaction is [pyruvate, water dikinase]-phosphate + phosphate + H(+) = [pyruvate, water dikinase] + diphosphate. Functionally, bifunctional serine/threonine kinase and phosphorylase involved in the regulation of the phosphoenolpyruvate synthase (PEPS) by catalyzing its phosphorylation/dephosphorylation. This is Putative phosphoenolpyruvate synthase regulatory protein from Bordetella avium (strain 197N).